Here is a 334-residue protein sequence, read N- to C-terminus: Lipoyl synthase (334 aa).

Positions 71, 76, 82, 97, 101, 104, and 312 each coordinate [4Fe-4S] cluster. The Radical SAM core domain occupies 83–301 (WSHGTATFMV…RQEGLRRGFR (219 aa)).

Belongs to the radical SAM superfamily. Lipoyl synthase family. Requires [4Fe-4S] cluster as cofactor.

It is found in the cytoplasm. It catalyses the reaction [[Fe-S] cluster scaffold protein carrying a second [4Fe-4S](2+) cluster] + N(6)-octanoyl-L-lysyl-[protein] + 2 oxidized [2Fe-2S]-[ferredoxin] + 2 S-adenosyl-L-methionine + 4 H(+) = [[Fe-S] cluster scaffold protein] + N(6)-[(R)-dihydrolipoyl]-L-lysyl-[protein] + 4 Fe(3+) + 2 hydrogen sulfide + 2 5'-deoxyadenosine + 2 L-methionine + 2 reduced [2Fe-2S]-[ferredoxin]. It participates in protein modification; protein lipoylation via endogenous pathway; protein N(6)-(lipoyl)lysine from octanoyl-[acyl-carrier-protein]: step 2/2. Catalyzes the radical-mediated insertion of two sulfur atoms into the C-6 and C-8 positions of the octanoyl moiety bound to the lipoyl domains of lipoate-dependent enzymes, thereby converting the octanoylated domains into lipoylated derivatives. This Halorhodospira halophila (strain DSM 244 / SL1) (Ectothiorhodospira halophila (strain DSM 244 / SL1)) protein is Lipoyl synthase.